We begin with the raw amino-acid sequence, 128 residues long: Insulin-like growth factor 2 (128 aa).

An N-terminal signal peptide occupies residues 1–24 (MGISMGKSMLVLLTFLAFASCCIA). The b stretch occupies residues 25 to 52 (AYRPSETLCGGELVDTLQFVCGDRGFYF). Cystine bridges form between C33/C71, C45/C84, and C70/C75. The segment at 53–64 (SRPASRVSRRSR) is c. Residues 65–85 (GIVEECCFRSCDLALLETYCA) form an a region. The interval 86–91 (TPAKSE) is d. Positions 92 to 128 (RDVSASLAVLPDNFPRYPVGKFFQYDTWRQSTQRLRR) are cleaved as a propeptide — e peptide.

The protein belongs to the insulin family. In terms of assembly, interacts with MYORG; this interaction is required for IGF2 secretion. Interacts with integrins ITGAV:ITGB3 and ITGA6:ITGB4; integrin-binding is required for IGF2 signaling. In terms of processing, proteolytically processed by PCSK4, proIGF2 is cleaved at Arg-128 and Arg-92 to generate big-IGF2 and mature IGF2.

The protein resides in the secreted. Its function is as follows. The insulin-like growth factors possess growth-promoting activity. Major fetal growth hormone in mammals. Plays a key role in regulating fetoplacental development. IGF2 is influenced by placental lactogen. Also involved in tissue differentiation. In adults, involved in glucose metabolism in adipose tissue, skeletal muscle and liver. Acts as a ligand for integrin which is required for IGF2 signaling. Positively regulates myogenic transcription factor MYOD1 function by facilitating the recruitment of transcriptional coactivators, thereby controlling muscle terminal differentiation. Inhibits myoblast differentiation and metabolism via increasing the mitochondrial respiration rate. Functionally, preptin undergoes glucose-mediated co-secretion with insulin, and acts as a physiological amplifier of glucose-mediated insulin secretion. Exhibits osteogenic properties by increasing osteoblast mitogenic activity through phosphoactivation of MAPK1 and MAPK3. This is Insulin-like growth factor 2 from Cavia porcellus (Guinea pig).